An 806-amino-acid chain; its full sequence is Protein translocase subunit SecA 2 (806 aa).

Residues glutamine 122, 140 to 144, and aspartate 533 contribute to the ATP site; that span reads GEGKT.

Belongs to the SecA family. In terms of assembly, monomer and homodimer. Part of the essential Sec protein translocation apparatus which comprises SecA, SecYEG and auxiliary proteins SecDF. Other proteins may also be involved.

The protein resides in the cell membrane. It is found in the cytoplasm. It catalyses the reaction ATP + H2O + cellular proteinSide 1 = ADP + phosphate + cellular proteinSide 2.. Functionally, part of the Sec protein translocase complex. Interacts with the SecYEG preprotein conducting channel. Has a central role in coupling the hydrolysis of ATP to the transfer of proteins into and across the cell membrane, serving as an ATP-driven molecular motor driving the stepwise translocation of polypeptide chains across the membrane. The protein is Protein translocase subunit SecA 2 of Mycobacterium ulcerans (strain Agy99).